The chain runs to 619 residues: Dihydroxy-acid dehydratase 1 (619 aa).

Asp-81 provides a ligand contact to Mg(2+). Residue Cys-122 participates in [2Fe-2S] cluster binding. The Mg(2+) site is built by Asp-123 and Lys-124. Lys-124 carries the post-translational modification N6-carboxylysine. Residue Cys-198 coordinates [2Fe-2S] cluster. A Mg(2+)-binding site is contributed by Glu-494. The active-site Proton acceptor is the Ser-520.

This sequence belongs to the IlvD/Edd family. Homodimer. [2Fe-2S] cluster serves as cofactor. It depends on Mg(2+) as a cofactor.

It carries out the reaction (2R)-2,3-dihydroxy-3-methylbutanoate = 3-methyl-2-oxobutanoate + H2O. The enzyme catalyses (2R,3R)-2,3-dihydroxy-3-methylpentanoate = (S)-3-methyl-2-oxopentanoate + H2O. The protein operates within amino-acid biosynthesis; L-isoleucine biosynthesis; L-isoleucine from 2-oxobutanoate: step 3/4. It functions in the pathway amino-acid biosynthesis; L-valine biosynthesis; L-valine from pyruvate: step 3/4. Functionally, functions in the biosynthesis of branched-chain amino acids. Catalyzes the dehydration of (2R,3R)-2,3-dihydroxy-3-methylpentanoate (2,3-dihydroxy-3-methylvalerate) into 2-oxo-3-methylpentanoate (2-oxo-3-methylvalerate) and of (2R)-2,3-dihydroxy-3-methylbutanoate (2,3-dihydroxyisovalerate) into 2-oxo-3-methylbutanoate (2-oxoisovalerate), the penultimate precursor to L-isoleucine and L-valine, respectively. In Bordetella pertussis (strain Tohama I / ATCC BAA-589 / NCTC 13251), this protein is Dihydroxy-acid dehydratase 1.